A 356-amino-acid polypeptide reads, in one-letter code: Glutamate 5-kinase (356 aa).

Lysine 6 lines the ATP pocket. Residues serine 46, aspartate 135, and asparagine 147 each contribute to the substrate site. 202 to 208 (TGGMRSK) lines the ATP pocket. The PUA domain occupies 265-342 (KGIIVVDRGA…SEVRKLLNTT (78 aa)).

The protein belongs to the glutamate 5-kinase family.

The protein localises to the cytoplasm. The catalysed reaction is L-glutamate + ATP = L-glutamyl 5-phosphate + ADP. The protein operates within amino-acid biosynthesis; L-proline biosynthesis; L-glutamate 5-semialdehyde from L-glutamate: step 1/2. Catalyzes the transfer of a phosphate group to glutamate to form L-glutamate 5-phosphate. The polypeptide is Glutamate 5-kinase (Aquifex aeolicus (strain VF5)).